The chain runs to 540 residues: MRFEALDTRRLTGFLAEYVNQPDQCSDLFSYRWKTNGWEQERSEDLAKRSFSHRQALCRLLEARHAPLRKREACMDNIHKLKQENALVVVAGQQAGLMTGPLYTAYKAMSVILLAKQYEATLNQPVVPLFWIAGEDHDLDEVRYVHYLKGDMWKKLMLGDEPNGEAASTKVLPKKELDTFLAKLFASLPETSYTNTLKAMVTQAAATAGTYTEFFKLLMHELFYREGLLFLDSNDPELRAIERPFFKQLIRKVDALQECQAAGEARFVEKGYPSPIATEKQNAHLFYTLDGKRRRLDYEAGRFYVRETERQFTKEELLAEVDSHPQRFSNNVVTRPLMQEWLLPTLAFVAGPGELAYWATLKDVFALFDYKLTPIIPRLSATFVPCRVEKHLRERKEAAETYILGEGEKLKEAWLASQHSYPVAQRAQAAAEAIEAAHLPFRELAGEISPTLKKMGEKNRAFIQGQIAFLKERMEREIREQHQVGLSKYDEAMTWLHPKDAPQERILHSFILLNTAGIDIFSRLLEKKPPHTGAHLVFYV.

Residues 457-477 (EKNRAFIQGQIAFLKERMERE) adopt a coiled-coil conformation.

It belongs to the BshC family.

In terms of biological role, involved in bacillithiol (BSH) biosynthesis. May catalyze the last step of the pathway, the addition of cysteine to glucosamine malate (GlcN-Mal) to generate BSH. This Shouchella clausii (strain KSM-K16) (Alkalihalobacillus clausii) protein is Putative cysteine ligase BshC.